Reading from the N-terminus, the 318-residue chain is NADH-ubiquinone oxidoreductase chain 1 (318 aa).

9 consecutive transmembrane segments (helical) span residues 2-22 (FLMN…FLTL), 37-57 (PNIV…KLFI), 69-89 (LMFT…WIPM), 100-120 (LGVL…LWSG), 136-156 (VAQT…IMMM), 171-191 (HMWL…STLA), 231-251 (IIMM…NPLF), 253-273 (ELFT…FLWV), and 293-313 (FLPL…LSAG).

This sequence belongs to the complex I subunit 1 family. Core subunit of respiratory chain NADH dehydrogenase (Complex I) which is composed of 45 different subunits.

The protein localises to the mitochondrion inner membrane. The enzyme catalyses a ubiquinone + NADH + 5 H(+)(in) = a ubiquinol + NAD(+) + 4 H(+)(out). In terms of biological role, core subunit of the mitochondrial membrane respiratory chain NADH dehydrogenase (Complex I) which catalyzes electron transfer from NADH through the respiratory chain, using ubiquinone as an electron acceptor. Essential for the catalytic activity and assembly of complex I. The polypeptide is NADH-ubiquinone oxidoreductase chain 1 (MT-ND1) (Euphractus sexcinctus (Six-banded armadillo)).